Here is a 258-residue protein sequence, read N- to C-terminus: Short-chain dehydrogenase/reductase aba4 (258 aa).

NADP(+)-binding residues include Ile20, Asp66, and Lys130. Active-site proton donor residues include Ser146 and Tyr160. Tyr160, Lys164, Ile193, and Thr195 together coordinate NADP(+). The Lowers pKa of active site Tyr role is filled by Lys164.

The protein belongs to the short-chain dehydrogenases/reductases (SDR) family.

It functions in the pathway hormone biosynthesis. Short-chain dehydrogenase/reductase; part of the gene cluster that mediates the biosynthesis of abscisic acid (ABA), a phytohormone that acts antagonistically toward salicylic acid (SA), jasmonic acid (JA) and ethylene (ETH) signaling, to impede plant defense responses. The first step of the pathway catalyzes the reaction from farnesyl diphosphate to alpha-ionylideneethane performed by the alpha-ionylideneethane synthase aba3 via a three-step reaction mechanism involving 2 neutral intermediates, beta-farnesene and allofarnesene. The cytochrome P450 monooxygenase aba1 might then be involved in the conversion of alpha-ionylideneethane to alpha-ionylideneacetic acid. Alpha-ionylideneacetic acid is further converted to abscisic acid in 2 steps involving the cytochrome P450 monooxygenase aba2 and the short-chain dehydrogenase/reductase aba4, via the intermediates 1'-deoxy-ABA or 1',4'-trans-diol-ABA, depending on the order of action of these 2 enzymes. Aba2 is responsible for the hydroxylation of carbon atom C-1' and aba4 might be involved in the oxidation of the C-4' carbon atom. The chain is Short-chain dehydrogenase/reductase aba4 from Botryotinia fuckeliana (Noble rot fungus).